We begin with the raw amino-acid sequence, 114 residues long: Fluoride-specific ion channel FluC 1 (114 aa).

The next 3 helical transmembrane spans lie at 23 to 43 (ATLT…SYVF), 52 to 72 (LSTA…TLSV), and 84 to 104 (FLAM…SHLG). Residues glycine 62 and threonine 65 each coordinate Na(+).

This sequence belongs to the fluoride channel Fluc/FEX (TC 1.A.43) family.

Its subcellular location is the cell membrane. It catalyses the reaction fluoride(in) = fluoride(out). Na(+) is not transported, but it plays an essential structural role and its presence is essential for fluoride channel function. Its function is as follows. Fluoride-specific ion channel. Important for reducing fluoride concentration in the cell, thus reducing its toxicity. The polypeptide is Fluoride-specific ion channel FluC 1 (Desulfitobacterium hafniense (strain Y51)).